Reading from the N-terminus, the 421-residue chain is Gamma-glutamyl phosphate reductase (421 aa).

Belongs to the gamma-glutamyl phosphate reductase family.

The protein localises to the cytoplasm. It catalyses the reaction L-glutamate 5-semialdehyde + phosphate + NADP(+) = L-glutamyl 5-phosphate + NADPH + H(+). It functions in the pathway amino-acid biosynthesis; L-proline biosynthesis; L-glutamate 5-semialdehyde from L-glutamate: step 2/2. In terms of biological role, catalyzes the NADPH-dependent reduction of L-glutamate 5-phosphate into L-glutamate 5-semialdehyde and phosphate. The product spontaneously undergoes cyclization to form 1-pyrroline-5-carboxylate. The polypeptide is Gamma-glutamyl phosphate reductase (Bordetella petrii (strain ATCC BAA-461 / DSM 12804 / CCUG 43448)).